The chain runs to 468 residues: H(+)/Cl(-) exchange transporter ClcA (468 aa).

The Cytoplasmic portion of the chain corresponds to 1–30; sequence MSTRETFKISLLAKMPKDVINQFLSKDKTP. Residues 31–67 form a helical membrane-spanning segment; the sequence is FSVLFLSLLVGILAGLVGTYFEQAVHLVSETRTDWLK. At 68–74 the chain is on the periplasmic side; that stretch reads SEIGSFL. Residues 75-98 traverse the membrane as a helical segment; the sequence is PLWLAAFLISAFLAFIGYFLVHRF. Positions 104 to 108 match the Selectivity filter part_1 motif; sequence GSGIP. Position 105 (Ser-105) interacts with chloride. Positions 107 to 114 form an intramembrane region, helical; that stretch reads IPEIEGAM. Topologically, residues 115-121 are cytoplasmic; the sequence is DGMRPVR. Transmembrane regions (helical) follow at residues 122–139 and 146–164; these read WWRV…ALGS and EGPT…SDIF. Residues 144 to 148 carry the Selectivity filter part_2 motif; it reads GREGP. Over 165-174 the chain is Cytoplasmic; that stretch reads RVKNEDTRHS. Intramembrane regions (helical) lie at residues 175 to 187 and 191 to 199; these read LLAA…LAAA and PLAGIMFVI. The Cytoplasmic portion of the chain corresponds to 200-212; sequence EEMRPQFRYTLIS. Residues 213–230 form a helical membrane-spanning segment; sequence VRAVIISAVAANIVFRVI. At 231-250 the chain is on the periplasmic side; it reads NGQDAVITMPQYDAPELSTL. Residues 251-279 traverse the membrane as a helical segment; that stretch reads GLFLLLGALFGVFGVLFNYLITLAQDLFV. Residues 280 to 285 lie on the Cytoplasmic side of the membrane; the sequence is KFHRND. Residues 286-307 traverse the membrane as a helical segment; the sequence is RKRYLLTGSMIGGCFGLLLLYV. The Periplasmic segment spans residues 308 to 327; that stretch reads PELTGGGISLIPTITNGGYG. A run of 2 helical transmembrane segments spans residues 328-347 and 353-374; these read AGIL…LCFG and GIFA…LIAK. The Selectivity filter part_3 signature appears at 353 to 357; it reads GIFAP. Ile-354 and Phe-355 together coordinate chloride. Residues 375 to 384 are Periplasmic-facing; sequence VWFPELNIEP. An intramembrane region (helical) is located at residues 385–399; the sequence is GMFAIAGMGALFAAT. Residues 400 to 402 constitute an intramembrane region (note=Loop between two helices); it reads VRA. The helical intramembrane region spans 403 to 414; it reads PITGILLVIEMT. Positions 415 to 419 form an intramembrane region, note=Loop between two helices; the sequence is NNYHL. The chain crosses the membrane as a helical span at residues 420–436; sequence ILPLIITSLGAVIFAQL. The Cytoplasmic segment spans residues 437-468; it reads LGGQPIYSQLLHRTLKNQKLQQQDLPPQSPNS. Tyr-443 lines the chloride pocket.

The protein belongs to the chloride channel (TC 2.A.49) family. ClcA subfamily. As to quaternary structure, homodimer.

The protein resides in the cell inner membrane. It carries out the reaction 2 chloride(in) + H(+)(out) = 2 chloride(out) + H(+)(in). Functionally, proton-coupled chloride transporter. Functions as antiport system and exchanges two chloride ions for 1 proton. Probably acts as an electrical shunt for an outwardly-directed proton pump that is linked to amino acid decarboxylation, as part of the extreme acid resistance (XAR) response. This chain is H(+)/Cl(-) exchange transporter ClcA, found in Vibrio cholerae serotype O1 (strain ATCC 39541 / Classical Ogawa 395 / O395).